Here is a 552-residue protein sequence, read N- to C-terminus: Urocanate hydratase (552 aa).

Residues 48 to 49 (GG), Gln126, 172 to 174 (GMG), Glu192, Arg197, 238 to 239 (NA), 259 to 263 (QTSAH), 269 to 270 (YV), and Tyr318 contribute to the NAD(+) site. Cys406 is an active-site residue. Position 488 (Gly488) interacts with NAD(+).

This sequence belongs to the urocanase family. NAD(+) is required as a cofactor.

Its subcellular location is the cytoplasm. The catalysed reaction is 4-imidazolone-5-propanoate = trans-urocanate + H2O. Its pathway is amino-acid degradation; L-histidine degradation into L-glutamate; N-formimidoyl-L-glutamate from L-histidine: step 2/3. Functionally, catalyzes the conversion of urocanate to 4-imidazolone-5-propionate. The chain is Urocanate hydratase from Herpetosiphon aurantiacus (strain ATCC 23779 / DSM 785 / 114-95).